A 108-amino-acid chain; its full sequence is Nucleoid-associated protein BAV0915 (108 aa).

This sequence belongs to the YbaB/EbfC family. As to quaternary structure, homodimer.

It localises to the cytoplasm. It is found in the nucleoid. Its function is as follows. Binds to DNA and alters its conformation. May be involved in regulation of gene expression, nucleoid organization and DNA protection. In Bordetella avium (strain 197N), this protein is Nucleoid-associated protein BAV0915.